The following is a 129-amino-acid chain: Large ribosomal subunit protein bL12 (129 aa).

This sequence belongs to the bacterial ribosomal protein bL12 family. As to quaternary structure, homodimer. Part of the ribosomal stalk of the 50S ribosomal subunit. Forms a multimeric L10(L12)X complex, where L10 forms an elongated spine to which 2 to 4 L12 dimers bind in a sequential fashion. Binds GTP-bound translation factors.

Forms part of the ribosomal stalk which helps the ribosome interact with GTP-bound translation factors. Is thus essential for accurate translation. This is Large ribosomal subunit protein bL12 from Protochlamydia amoebophila (strain UWE25).